We begin with the raw amino-acid sequence, 517 residues long: Protein AGENET DOMAIN (AGD)-CONTAINING P1 (517 aa).

Positions 1-35 (MLRPRRSLGVSSPAKQRKKAAPKNSMATRANRKRL) are disordered. Plant Agenet, chromatin-binding regions lie at residues 37–111 (SYLK…PPMS) and 117–173 (KKIV…EWVD). Positions 177-202 (KPPLEETEEEEDESEEDKLDDSEDEE) are disordered. Acidic residues predominate over residues 181–202 (EETEEEEDESEEDKLDDSEDEE). 4 plant Agenet, chromatin-binding regions span residues 219–287 (QMFS…PRDE), 289–345 (IDFA…DWVD), 378–446 (QAFS…LESV), and 449–505 (SPFE…EWID).

In terms of tissue distribution, expressed ubiquitously during vegetative stage, in meristems (e.g. root tips and shoot apical meristem), and in ovules and young seeds during reproductive stage.

Its subcellular location is the nucleus. In terms of biological role, heterochromatin-binding protein that preferentially occupies long transposons and specifically recognizes the histone H3 'Lys-9' methylation (H3K9me) marks, with a stronger affinity for dimethylated H3K9 (H3K9me2). Required for transcriptional silencing, non-CG DNA methylation (e.g. CHG and CHH regions), and H3K9 dimethylation (H3K9me2) at some loci. Mediates heterochromatin phase separation and chromocenter formation. The polypeptide is Protein AGENET DOMAIN (AGD)-CONTAINING P1 (Arabidopsis thaliana (Mouse-ear cress)).